A 266-amino-acid chain; its full sequence is ATP synthase subunit a (266 aa).

5 helical membrane-spanning segments follow: residues 28–48 (SINV…LVIF), 88–108 (LIAP…LMDL), 141–161 (DVNI…FYSI), 206–226 (LFGN…LLPW), and 237–257 (AIFH…LTVV).

This sequence belongs to the ATPase A chain family. As to quaternary structure, F-type ATPases have 2 components, CF(1) - the catalytic core - and CF(0) - the membrane proton channel. CF(1) has five subunits: alpha(3), beta(3), gamma(1), delta(1), epsilon(1). CF(0) has three main subunits: a(1), b(2) and c(9-12). The alpha and beta chains form an alternating ring which encloses part of the gamma chain. CF(1) is attached to CF(0) by a central stalk formed by the gamma and epsilon chains, while a peripheral stalk is formed by the delta and b chains.

Its subcellular location is the cell inner membrane. In terms of biological role, key component of the proton channel; it plays a direct role in the translocation of protons across the membrane. This Pectobacterium carotovorum subsp. carotovorum (strain PC1) protein is ATP synthase subunit a.